Consider the following 190-residue polypeptide: DNA-invertase hin (190 aa).

Residues 2-135 (ATIGYIRVST…AGLAAARAQG (134 aa)) form the Resolvase/invertase-type recombinase catalytic domain. Catalysis depends on S10, which acts as the O-(5'-phospho-DNA)-serine intermediate. A DNA-binding region (H-T-H motif) is located at residues 162-181 (RQQLAIIFGIGVSTLYRYFP).

Belongs to the site-specific recombinase resolvase family.

Its function is as follows. A DNA fragment of approximately 900 base pairs, adjacent to the fljB (H2) gene, which specifies the synthesis of phase-2 flagellin, can exist in either orientation with respect to fljB. The orientation of the inversion region controls expression of fljB. The hin gene occupies about two-thirds of the inversion region; it is required for the inversion of the fljB controlling region. The polypeptide is DNA-invertase hin (hin) (Salmonella typhimurium (strain LT2 / SGSC1412 / ATCC 700720)).